Consider the following 218-residue polypeptide: NAD(P)H-quinone oxidoreductase subunit U, chloroplastic (218 aa).

Residues 1-53 (MASLSTITQPSLVHIPGESVLHHVPSTCSFPWKPTINTKRIICSPARNSSEVS) constitute a chloroplast transit peptide. Positions 47-72 (RNSSEVSAEAETEGGSSTAVDEAPKE) are disordered. Residues 95–159 (DHYGRLGIFR…EERRMYDWSL (65 aa)) form the J domain. Residues 197–217 (ILGYFIGAWLVLGVALSVAFN) traverse the membrane as a helical segment.

Part of the chloroplast NDH complex, composed of a mixture of chloroplast and nucleus encoded subunits. Component of the electron donor-binding subcomplex, at least composed of NDHS, NDHT and NDHU.

It is found in the plastid. It localises to the chloroplast thylakoid membrane. The catalysed reaction is a plastoquinone + NADH + (n+1) H(+)(in) = a plastoquinol + NAD(+) + n H(+)(out). It catalyses the reaction a plastoquinone + NADPH + (n+1) H(+)(in) = a plastoquinol + NADP(+) + n H(+)(out). In terms of biological role, NDH shuttles electrons from NAD(P)H:plastoquinone, via FMN and iron-sulfur (Fe-S) centers, to quinones in the photosynthetic chain and possibly in a chloroplast respiratory chain. The immediate electron acceptor for the enzyme in this species is believed to be plastoquinone. Couples the redox reaction to proton translocation, and thus conserves the redox energy in a proton gradient. The chain is NAD(P)H-quinone oxidoreductase subunit U, chloroplastic from Arabidopsis thaliana (Mouse-ear cress).